Reading from the N-terminus, the 547-residue chain is MSFDVTTTEPWATLSERYTAMKATTLRDLFASNPNRAQELSFEAAGLHVDLSKNLIDAETVAAFTALAKASGMREKIKAMFDGEHINNTEDRAVLHTALRLAVDAELNVDGQDVAADVHEVLGRMRDFATSLRNGSWRGYSNHTIKTIVNIGIGGSDLGPAMATKALRTYATAGINAKFVSNVDPADMHAVLDELDPESTLFVVASKTFTTQETLANAHAAKRWLVAAAGGDESAVAKHFVAVSTNAEKVAEFGIDTKNMFGFWNWVGGRYSVDSAIGLSLMSVIGPMDFMRFLDGFRAMDEHFRTADFESNIPVLMGMLNVFYNDFFGAETHAVLPYSQDLGRFPAYLQQLTMESNGKSVRHDGSAVTTNTGEIYWGEPGTNGQHAFFQLIHQGTKLIPADFIGFARPKEDLPTASGEGSMHDLLMSNFFAQTKVLAFGKTAEEIAAEGVSPELVAHKVMPGNRPTTTIMAEELTPFALGALIALYEHIVFVEGVIWDINSFDQWGVELGKQQANDLAPAVAGEVAVDSGDSSTDALISWYRSHRG.

Glu355 functions as the Proton donor in the catalytic mechanism. Catalysis depends on residues His386 and Lys512.

Belongs to the GPI family.

Its subcellular location is the cytoplasm. It carries out the reaction alpha-D-glucose 6-phosphate = beta-D-fructose 6-phosphate. The protein operates within carbohydrate biosynthesis; gluconeogenesis. It functions in the pathway carbohydrate degradation; glycolysis; D-glyceraldehyde 3-phosphate and glycerone phosphate from D-glucose: step 2/4. Functionally, catalyzes the reversible isomerization of glucose-6-phosphate to fructose-6-phosphate. The polypeptide is Glucose-6-phosphate isomerase (Corynebacterium diphtheriae (strain ATCC 700971 / NCTC 13129 / Biotype gravis)).